We begin with the raw amino-acid sequence, 527 residues long: EGF domain-specific O-linked N-acetylglucosamine transferase (527 aa).

Positions 1–17 (MFMLLVFGALLPEVPLS) are cleaved as a signal peptide. A Required for optimal activity motif is present at residues 295 to 297 (DYD). N354 carries N-linked (GlcNAc...) asparagine glycosylation. The short motif at 524 to 527 (HDEL) is the Prevents secretion from ER element.

This sequence belongs to the glycosyltransferase 61 family.

The protein resides in the endoplasmic reticulum lumen. It catalyses the reaction L-seryl-[protein] + UDP-N-acetyl-alpha-D-glucosamine = 3-O-(N-acetyl-beta-D-glucosaminyl)-L-seryl-[protein] + UDP + H(+). The catalysed reaction is L-threonyl-[protein] + UDP-N-acetyl-alpha-D-glucosamine = 3-O-(N-acetyl-beta-D-glucosaminyl)-L-threonyl-[protein] + UDP + H(+). Its function is as follows. Catalyzes the transfer of a single N-acetylglucosamine from UDP-GlcNAc to a serine or threonine residue in extracellular proteins resulting in their modification with a beta-linked N-acetylglucosamine (O-GlcNAc). Specifically glycosylates the Thr residue located between the fifth and sixth conserved cysteines of folded EGF-like domains. This Bos taurus (Bovine) protein is EGF domain-specific O-linked N-acetylglucosamine transferase (EOGT).